Consider the following 310-residue polypeptide: Homeobox protein Hox-A13a (310 aa).

A DNA-binding region (homeobox) is located at residues 244–303 (GRKKRVPYTKVQLKELEREYATNKFITKDKRRRISAQTNLSERQVTIWFQNRRVKEKKVV).

The protein belongs to the Abd-B homeobox family.

It localises to the nucleus. Sequence-specific transcription factor which is part of a developmental regulatory system that provides cells with specific positional identities on the anterior-posterior axis. This chain is Homeobox protein Hox-A13a (hoxa13a), found in Danio rerio (Zebrafish).